The sequence spans 228 residues: Uracil-DNA glycosylase (228 aa).

Asp64 acts as the Proton acceptor in catalysis.

This sequence belongs to the uracil-DNA glycosylase (UDG) superfamily. UNG family.

The protein resides in the cytoplasm. It catalyses the reaction Hydrolyzes single-stranded DNA or mismatched double-stranded DNA and polynucleotides, releasing free uracil.. Functionally, excises uracil residues from the DNA which can arise as a result of misincorporation of dUMP residues by DNA polymerase or due to deamination of cytosine. In Pectobacterium atrosepticum (strain SCRI 1043 / ATCC BAA-672) (Erwinia carotovora subsp. atroseptica), this protein is Uracil-DNA glycosylase.